Consider the following 204-residue polypeptide: Probable GTP-binding protein EngB (204 aa).

The region spanning Gly-22–Ile-197 is the EngB-type G domain. Residues Gly-30–Ser-37, Gly-57–Gln-61, Asp-75–Gly-78, Asn-144–Asp-147, and Phe-176–Ala-178 each bind GTP. Mg(2+) is bound by residues Ser-37 and Thr-59.

The protein belongs to the TRAFAC class TrmE-Era-EngA-EngB-Septin-like GTPase superfamily. EngB GTPase family. Requires Mg(2+) as cofactor.

Its function is as follows. Necessary for normal cell division and for the maintenance of normal septation. The polypeptide is Probable GTP-binding protein EngB (Ruminiclostridium cellulolyticum (strain ATCC 35319 / DSM 5812 / JCM 6584 / H10) (Clostridium cellulolyticum)).